The primary structure comprises 229 residues: Small ribosomal subunit protein uS3 (229 aa).

The region spanning 39–109 is the KH type-2 domain; sequence MRKYIKEQLM…QVNIDIVEIR (71 aa). Residues 210 to 229 form a disordered region; that stretch reads VVSQQNSRPSGPRGPRRPRA.

The protein belongs to the universal ribosomal protein uS3 family. As to quaternary structure, part of the 30S ribosomal subunit. Forms a tight complex with proteins S10 and S14.

Binds the lower part of the 30S subunit head. Binds mRNA in the 70S ribosome, positioning it for translation. The chain is Small ribosomal subunit protein uS3 from Akkermansia muciniphila (strain ATCC BAA-835 / DSM 22959 / JCM 33894 / BCRC 81048 / CCUG 64013 / CIP 107961 / Muc).